Consider the following 237-residue polypeptide: Class B acid phosphatase (237 aa).

A signal peptide spans 1-23 (MRKTPLALSAVFLLLSLNQSAFA). D69 functions as the Nucleophile in the catalytic mechanism. 2 residues coordinate Mg(2+): D69 and D71. The active-site Proton donor is D71. Substrate contacts are provided by residues 137-138 (TG) and K177. Position 192 (D192) interacts with Mg(2+).

It belongs to the class B bacterial acid phosphatase family. In terms of assembly, homotetramer. It depends on Mg(2+) as a cofactor.

It is found in the periplasm. The enzyme catalyses a phosphate monoester + H2O = an alcohol + phosphate. In terms of biological role, dephosphorylates several organic phosphate monoesters. Also has a phosphotransferase activity catalyzing the transfer of low-energy phosphate groups from organic phosphate monoesters to free hydroxyl groups of various organic compounds. This Rahnella sp. (strain Y9602) protein is Class B acid phosphatase.